We begin with the raw amino-acid sequence, 512 residues long: Putative aldehyde-dehydrogenase-like protein y4uC (512 aa).

The tract at residues 14 to 41 is disordered; that stretch reads MKPERGRRSPLPRRPTRPPDERSSGIGN. 266–271 lines the NADP(+) pocket; the sequence is GGFATG. Catalysis depends on residues E286 and C320.

Belongs to the aldehyde dehydrogenase family.

It participates in amino-acid degradation; 4-aminobutanoate degradation. Could be a succinate-semialdehyde dehydrogenase (NADP(+)). The polypeptide is Putative aldehyde-dehydrogenase-like protein y4uC (Sinorhizobium fredii (strain NBRC 101917 / NGR234)).